We begin with the raw amino-acid sequence, 92 residues long: Large ribosomal subunit protein eL31 (92 aa).

It belongs to the eukaryotic ribosomal protein eL31 family.

In Haloquadratum walsbyi (strain DSM 16790 / HBSQ001), this protein is Large ribosomal subunit protein eL31.